Here is a 66-residue protein sequence, read N- to C-terminus: uncharacterized protein (66 aa).

This is an uncharacterized protein from Human cytomegalovirus (strain AD169) (HHV-5).